The following is a 361-amino-acid chain: Prostaglandin E2 receptor EP2 subtype (361 aa).

The span at 1-10 (MGSISNNSGS) shows a compositional bias: polar residues. The tract at residues 1 to 21 (MGSISNNSGSEDCESREWLPS) is disordered. Residues 1–23 (MGSISNNSGSEDCESREWLPSGE) are Extracellular-facing. N-linked (GlcNAc...) asparagine glycosylation is present at asparagine 6. A helical membrane pass occupies residues 24 to 47 (SPAISSAMFSAGVLGNLIALALLA). Residues 48-65 (RRWRGDAGRRAGRGNSIS) lie on the Cytoplasmic side of the membrane. Residues 66–91 (LFHVLVTELVFTDLLGTCLISPVVLA) traverse the membrane as a helical segment. Over 92 to 111 (SYARNQTLMALEPERRACTY) the chain is Extracellular. Asparagine 96 is a glycosylation site (N-linked (GlcNAc...) asparagine). The cysteines at positions 109 and 187 are disulfide-linked. Residues 112–132 (FAFAMTFFSLATMLMLFAMAL) traverse the membrane as a helical segment. The Cytoplasmic segment spans residues 133–151 (ERYLSIGRPYFYQRHVTRR). A helical membrane pass occupies residues 152 to 176 (GGLAVLPTIYTVSLLFCSLPLLGYG). Topologically, residues 177–198 (QYVQYCPGTWCFIRHGRTAYLQ) are extracellular. Residues 199–223 (LYATLLLLLIVAVLACNFSVILNLI) form a helical membrane-spanning segment. Residues 224 to 262 (RMHRRSGRSRCGPSLGSCRDGSGTRRRGERVSVAEETDH) lie on the Cytoplasmic side of the membrane. Residues 230-253 (GRSRCGPSLGSCRDGSGTRRRGER) are disordered. The helical transmembrane segment at 263-286 (LILLAIMTITFAICSLPFTIFAYM) threads the bilayer. Residue asparagine 287 is glycosylated (N-linked (GlcNAc...) asparagine). The Extracellular segment spans residues 287–299 (NETSSRREKWDLQ). The helical transmembrane segment at 300-323 (ALRFLSINSIIDPWVFAIFRPPVL) threads the bilayer. Residues 324-361 (RLMRSVLCCRVSLRAQDATQTSCSIQSNASRLTFVDTS) are Cytoplasmic-facing.

The protein belongs to the G-protein coupled receptor 1 family.

The protein localises to the cell membrane. In terms of biological role, receptor for prostaglandin E2 (PGE2). The activity of this receptor is mediated by G(s) proteins that stimulate adenylate cyclase. The subsequent raise in intracellular cAMP is responsible for the relaxing effect of this receptor on smooth muscle. The chain is Prostaglandin E2 receptor EP2 subtype (PTGER2) from Canis lupus familiaris (Dog).